The sequence spans 185 residues: Ribosome-recycling factor (185 aa).

The protein belongs to the RRF family.

The protein localises to the cytoplasm. Responsible for the release of ribosomes from messenger RNA at the termination of protein biosynthesis. May increase the efficiency of translation by recycling ribosomes from one round of translation to another. This is Ribosome-recycling factor from Thermotoga sp. (strain RQ2).